A 182-amino-acid polypeptide reads, in one-letter code: Transmembrane protein 11 homolog, mitochondrial (182 aa).

Serine 25 carries the phosphoserine modification. 2 helical membrane passes run 70–89 and 91–108; these read TAVA…RDRP and IAAP…LYTV.

It belongs to the TMEM11 family.

Its subcellular location is the mitochondrion inner membrane. Plays a role in mitochondrial morphogenesis. This chain is Transmembrane protein 11 homolog, mitochondrial (Pmi), found in Drosophila melanogaster (Fruit fly).